Consider the following 265-residue polypeptide: Phosphate import ATP-binding protein PstB 1 (265 aa).

Residues 20–260 form the ABC transporter domain; the sequence is LSTNDLSVLY…PKGKITEDYI (241 aa). ATP is bound at residue 53-60; the sequence is GASGSGKS.

The protein belongs to the ABC transporter superfamily. Phosphate importer (TC 3.A.1.7) family. In terms of assembly, the complex is composed of two ATP-binding proteins (PstB), two transmembrane proteins (PstC and PstA) and a solute-binding protein (PstS).

It localises to the cell membrane. It carries out the reaction phosphate(out) + ATP + H2O = ADP + 2 phosphate(in) + H(+). Part of the ABC transporter complex PstSACB involved in phosphate import. Responsible for energy coupling to the transport system. In Lactobacillus acidophilus (strain ATCC 700396 / NCK56 / N2 / NCFM), this protein is Phosphate import ATP-binding protein PstB 1.